The chain runs to 522 residues: Stellatic acid synthase (522 aa).

The chain crosses the membrane as a helical span at residues 23–43 (IYGIYEPLLALFAVYSVAVVV). N-linked (GlcNAc...) asparagine glycans are attached at residues N267 and N451. C464 is a binding site for heme. Residue N495 is glycosylated (N-linked (GlcNAc...) asparagine).

This sequence belongs to the cytochrome P450 family. Requires heme as cofactor.

Its subcellular location is the membrane. It catalyses the reaction stellata-2,6,19-triene + 3 reduced [NADPH--hemoprotein reductase] + 3 O2 = stellatate + 3 oxidized [NADPH--hemoprotein reductase] + 4 H2O + 4 H(+). The protein operates within secondary metabolite biosynthesis; terpenoid biosynthesis. Its function is as follows. Cytochrome P450 monooxygenase; part of the gene cluster that mediates the biosynthesis of the sesterterpene stellatic acid. The first step in the pathway is performed by the stellatatriene synthase that possesses both prenyl transferase and terpene cyclase activity, converting isopentenyl diphosphate and dimethylallyl diphosphate into geranylgeranyl diphosphate (GGDP) and then converting GGDP into stellata-2,6,19-triene. The cytochrome P450 monooxygenase Stl-P450 then catalyzes three successive oxidation reactions on the C-20 methyl group to generate the carboxylic acid of stellatic acid. This Emericella variicolor (Aspergillus stellatus) protein is Stellatic acid synthase.